We begin with the raw amino-acid sequence, 599 residues long: Elongation factor 4 (599 aa).

One can recognise a tr-type G domain in the interval 4 to 186 (KYIRNFSIIA…AIVEKVPPPK (183 aa)). GTP-binding positions include 16 to 21 (DHGKST) and 133 to 136 (NKID).

It belongs to the TRAFAC class translation factor GTPase superfamily. Classic translation factor GTPase family. LepA subfamily.

The protein localises to the cell inner membrane. It carries out the reaction GTP + H2O = GDP + phosphate + H(+). Required for accurate and efficient protein synthesis under certain stress conditions. May act as a fidelity factor of the translation reaction, by catalyzing a one-codon backward translocation of tRNAs on improperly translocated ribosomes. Back-translocation proceeds from a post-translocation (POST) complex to a pre-translocation (PRE) complex, thus giving elongation factor G a second chance to translocate the tRNAs correctly. Binds to ribosomes in a GTP-dependent manner. The chain is Elongation factor 4 from Bdellovibrio bacteriovorus (strain ATCC 15356 / DSM 50701 / NCIMB 9529 / HD100).